We begin with the raw amino-acid sequence, 196 residues long: Beta-crystallin A4 (196 aa).

Residue threonine 2 is modified to N-acetylthreonine. The tract at residues 2 to 11 is N-terminal arm; that stretch reads TLQCTKSAGP. Beta/gamma crystallin 'Greek key' domains lie at 12–51 and 52–98; these read WKMV…KVLS and GAWV…RPAA. Residues 99–104 are connecting peptide; it reads CANHRD. Beta/gamma crystallin 'Greek key' domains lie at 105–146 and 147–195; these read SRLT…HVHS and GAWV…RRIQ.

This sequence belongs to the beta/gamma-crystallin family. Homo/heterodimer, or complexes of higher-order. The structure of beta-crystallin oligomers seems to be stabilized through interactions between the N-terminal arms.

In terms of biological role, crystallins are the dominant structural components of the vertebrate eye lens. The polypeptide is Beta-crystallin A4 (CRYBA4) (Homo sapiens (Human)).